The primary structure comprises 478 residues: Protein nucleotidyltransferase YdiU (478 aa).

8 residues coordinate ATP: Gly84, Gly86, Arg87, Lys107, Asp119, Gly120, Arg170, and Arg177. The active-site Proton acceptor is Asp246. Residues Asn247 and Asp256 each coordinate Mg(2+). Asp256 lines the ATP pocket.

This sequence belongs to the SELO family. The cofactor is Mg(2+). Mn(2+) is required as a cofactor.

The catalysed reaction is L-seryl-[protein] + ATP = 3-O-(5'-adenylyl)-L-seryl-[protein] + diphosphate. It catalyses the reaction L-threonyl-[protein] + ATP = 3-O-(5'-adenylyl)-L-threonyl-[protein] + diphosphate. It carries out the reaction L-tyrosyl-[protein] + ATP = O-(5'-adenylyl)-L-tyrosyl-[protein] + diphosphate. The enzyme catalyses L-histidyl-[protein] + UTP = N(tele)-(5'-uridylyl)-L-histidyl-[protein] + diphosphate. The catalysed reaction is L-seryl-[protein] + UTP = O-(5'-uridylyl)-L-seryl-[protein] + diphosphate. It catalyses the reaction L-tyrosyl-[protein] + UTP = O-(5'-uridylyl)-L-tyrosyl-[protein] + diphosphate. Nucleotidyltransferase involved in the post-translational modification of proteins. It can catalyze the addition of adenosine monophosphate (AMP) or uridine monophosphate (UMP) to a protein, resulting in modifications known as AMPylation and UMPylation. The polypeptide is Protein nucleotidyltransferase YdiU (Escherichia coli (strain ATCC 8739 / DSM 1576 / NBRC 3972 / NCIMB 8545 / WDCM 00012 / Crooks)).